Consider the following 227-residue polypeptide: ATP-dependent dethiobiotin synthetase BioD (227 aa).

Residue D12–H17 coordinates ATP. Residue T16 participates in Mg(2+) binding. K37 is an active-site residue. S41 serves as a coordination point for substrate. Residues D54, E116–G119, N176–Q177, and P205–S207 each bind ATP. 2 residues coordinate Mg(2+): D54 and E116.

The protein belongs to the dethiobiotin synthetase family. As to quaternary structure, homodimer. Requires Mg(2+) as cofactor.

The protein localises to the cytoplasm. The catalysed reaction is (7R,8S)-7,8-diammoniononanoate + CO2 + ATP = (4R,5S)-dethiobiotin + ADP + phosphate + 3 H(+). It participates in cofactor biosynthesis; biotin biosynthesis; biotin from 7,8-diaminononanoate: step 1/2. Functionally, catalyzes a mechanistically unusual reaction, the ATP-dependent insertion of CO2 between the N7 and N8 nitrogen atoms of 7,8-diaminopelargonic acid (DAPA, also called 7,8-diammoniononanoate) to form a ureido ring. In Pseudoalteromonas translucida (strain TAC 125), this protein is ATP-dependent dethiobiotin synthetase BioD.